A 30-amino-acid chain; its full sequence is Cyclotide psyleio E (30 aa).

Positions Ser-1–Lys-30 form a cross-link, cyclopeptide (Ser-Lys). Intrachain disulfides connect Cys-7/Cys-21, Cys-11/Cys-23, and Cys-16/Cys-28.

This is a cyclic peptide.

Its function is as follows. Probably participates in a plant defense mechanism. This is Cyclotide psyleio E from Psychotria leiocarpa.